Here is a 592-residue protein sequence, read N- to C-terminus: Delta-like protein 3 (592 aa).

Positions 1-32 are cleaved as a signal peptide; that stretch reads MVSLQVSPLSQTLILAFLLPQALPAGVFELQI. The Extracellular portion of the chain corresponds to 33–490; that stretch reads HSFGPGPGLG…LRQADPQRFL (458 aa). Residues 174-213 form the DSL domain; it reads ARCEPPAVGAACARLCRSRSAPSRCGPGLRPCTPFPDECE. EGF-like domains lie at 214–247, 272–308, 310–349, 351–387, 389–425, and 427–463; these read APSV…PLCT, GPGP…LRCE, SGVT…SNCE, RVDR…PRCE, DLDD…RDCR, and RADP…VRCE. Cystine bridges form between cysteine 218–cysteine 229, cysteine 222–cysteine 235, cysteine 237–cysteine 246, cysteine 276–cysteine 287, cysteine 281–cysteine 296, cysteine 298–cysteine 307, cysteine 314–cysteine 325, cysteine 319–cysteine 337, cysteine 339–cysteine 348, cysteine 355–cysteine 366, cysteine 360–cysteine 375, cysteine 377–cysteine 386, cysteine 393–cysteine 404, cysteine 398–cysteine 413, cysteine 415–cysteine 424, cysteine 431–cysteine 442, cysteine 436–cysteine 451, and cysteine 453–cysteine 462. The helical transmembrane segment at 491–511 threads the bilayer; sequence LPPALGLLVAAGLAGAALLVI. The Cytoplasmic portion of the chain corresponds to 512 to 592; sequence HVRRRGPGQD…REDWLIQVLF (81 aa). The tract at residues 548 to 567 is disordered; that stretch reads QDGAGDGPSSSADWNHPEDG.

As to quaternary structure, can bind and activate Notch-1 or another Notch receptor. In terms of processing, ubiquitinated by MIB (MIB1 or MIB2), leading to its endocytosis and subsequent degradation. In terms of tissue distribution, predominantly expressed in the neuroectoderm and paraxial mesoderm during embryogenesis.

It localises to the membrane. Its function is as follows. Inhibits primary neurogenesis. May be required to divert neurons along a specific differentiation pathway. Plays a role in the formation of somite boundaries during segmentation of the paraxial mesoderm. This is Delta-like protein 3 (Dll3) from Mus musculus (Mouse).